The primary structure comprises 327 residues: Serine/threonine-protein phosphatase PP1-beta catalytic subunit (327 aa).

An N-acetylalanine modification is found at Ala2. Positions 63, 65, 91, and 123 each coordinate Mn(2+). The Proton donor role is filled by His124. Mn(2+) contacts are provided by His172 and His247. The segment at 305–327 (QYGGLNSGRPVTPPRTANPPKKR) is disordered. Thr316 is subject to Phosphothreonine.

It belongs to the PPP phosphatase family. PP-1 subfamily. PP1 comprises a catalytic subunit, PPP1CA, PPP1CB or PPP1CC, which is folded into its native form by inhibitor 2 and glycogen synthetase kinase 3, and then complexed to one or several targeting or regulatory subunits. The targeting or regulatory subunits determine the substrate specificity of PP1. PPP1R12A, PPP1R12B and PPP1R12C mediate binding to myosin. PPP1R3A (in skeletal muscle), PPP1R3B (in liver), PPP1R3C, PPP1R3D and PPP1R3F (in brain) mediate binding to glycogen. PPP1R15A and PPP1R15B mediate binding to EIF2S1. Part of a complex containing PPP1R15B, PP1 and NCK1/2. Interacts with PPP1R7 and PPP1R12C. Interacts with PPP1R16B. Component of the PTW/PP1 phosphatase complex, composed of PPP1R10/PNUTS, TOX4, WDR82, and PPP1CA or PPP1CB or PPP1CC. Interacts with PPP1R8. Interacts with PPP1R12A and NUAK1; the interaction is direct. Interacts with TRIM28; the interaction is weak. Interacts with FOXP3. Interacts with RRP1B. Interacts with SERPINE1. Interacts with LZTR1. Component of the SHOC2-MRAS-PP1c (SMP) complex consisting of SHOC2, GTP-bound M-Ras/MRAS and the catalytic subunit of protein phosphatase 1 (either PPP1CA, PPP1CB or PPP1CC). SHOC2 and PP1c preferably bind M-Ras/MRAS, but they also bind K-Ras/KRAS, N-Ras/NRAS and H-Ras/HRAS; these interactions are GTP-dependent and both SHOC2 and PP1c are required to form a stable complex. Interacts with SHOC2 in the absence of Ras GTPases. It depends on Mn(2+) as a cofactor.

It is found in the cytoplasm. The protein resides in the nucleus. The protein localises to the nucleoplasm. It localises to the nucleolus. The enzyme catalyses O-phospho-L-seryl-[protein] + H2O = L-seryl-[protein] + phosphate. It carries out the reaction O-phospho-L-threonyl-[protein] + H2O = L-threonyl-[protein] + phosphate. It catalyses the reaction O-phospho-L-seryl-[myosin light chain] + H2O = L-seryl-[myosin light chain] + phosphate. The catalysed reaction is O-phospho-L-threonyl-[myosin light chain] + H2O = L-threonyl-[myosin light chain] + phosphate. Its activity is regulated as follows. Inhibited by the toxins okadaic acid, tautomycin and microcystin Leu-Arg. The phosphatase activity of the PPP1R15A-PP1 complex toward EIF2S1 is specifically inhibited by Salubrinal, a drug that protects cells from endoplasmic reticulum stress. Protein phosphatase that associates with over 200 regulatory proteins to form highly specific holoenzymes which dephosphorylate hundreds of biological targets. Protein phosphatase (PP1) is essential for cell division, it participates in the regulation of glycogen metabolism, muscle contractility and protein synthesis. Involved in regulation of ionic conductances and long-term synaptic plasticity. Component of the PTW/PP1 phosphatase complex, which plays a role in the control of chromatin structure and cell cycle progression during the transition from mitosis into interphase. In balance with CSNK1D and CSNK1E, determines the circadian period length, through the regulation of the speed and rhythmicity of PER1 and PER2 phosphorylation. May dephosphorylate CSNK1D and CSNK1E. Core component of the SHOC2-MRAS-PP1c (SMP) holophosphatase complex that regulates the MAPK pathway activation. The SMP complex specifically dephosphorylates the inhibitory phosphorylation at 'Ser-259' of RAF1 kinase, 'Ser-365' of BRAF kinase and 'Ser-214' of ARAF kinase, stimulating their kinase activities. The SMP complex enhances the dephosphorylation activity and substrate specificity of PP1c. This Bos taurus (Bovine) protein is Serine/threonine-protein phosphatase PP1-beta catalytic subunit (PPP1CB).